The chain runs to 597 residues: Ribosomal oxygenase 1 (597 aa).

M1 carries the post-translational modification N-acetylmethionine. The tract at residues 1–138 (MDELPNGNGA…HVDDPERPWD (138 aa)) is disordered. Basic residues-rich tracts occupy residues 14–24 (KRGRGRRRRQP) and 37–48 (RPRKVRRHRKSA). The segment covering 49 to 62 (ASRVAALRARALLS) has biased composition (low complexity). S62 and S65 each carry phosphoserine. The segment covering 72–81 (VRGKRERPAE) has biased composition (basic and acidic residues). The residue at position 86 (S86) is a Phosphoserine. Residues 250–395 (CSLRLLCPQA…DFLEAVLPLA (146 aa)) form the JmjC domain. H296, D298, and H361 together coordinate Fe cation.

This sequence belongs to the ROX family. NO66 subfamily. Interacts with SP7/OSX; the interaction is direct. Interacts with MYC. Interacts with PHF19; leading to its recruitment to H3K36me3 sites. Fe(2+) is required as a cofactor.

The protein resides in the nucleus. Its subcellular location is the nucleolus. The protein localises to the nucleoplasm. The catalysed reaction is N(6),N(6)-dimethyl-L-lysyl(36)-[histone H3] + 2 2-oxoglutarate + 2 O2 = L-lysyl(36)-[histone H3] + 2 formaldehyde + 2 succinate + 2 CO2. It catalyses the reaction N(6)-methyl-L-lysyl-[protein] + 2-oxoglutarate + O2 = L-lysyl-[protein] + formaldehyde + succinate + CO2. The enzyme catalyses L-histidyl-[protein] + 2-oxoglutarate + O2 = (3S)-3-hydroxy-L-histidyl-[protein] + succinate + CO2. Functionally, oxygenase that can act as both a histone lysine demethylase and a ribosomal histidine hydroxylase. Specifically demethylates 'Lys-4' (H3K4me) and 'Lys-36' (H3K36me) of histone H3, thereby playing a central role in histone code. Preferentially demethylates trimethylated H3 'Lys-4' (H3K4me3) and monomethylated H3 'Lys-4' (H3K4me1) residues, while it has weaker activity for dimethylated H3 'Lys-36' (H3K36me2). Acts as a regulator of osteoblast differentiation via its interaction with SP7/OSX by demethylating H3K4me and H3K36me, thereby inhibiting SP7/OSX-mediated promoter activation. Also catalyzes demethylation of non-histone proteins, such as CGAS: demethylation of monomethylated CGAS promotes interaction between CGAS and PARP1, followed by PARP1 inactivation. Also catalyzes the hydroxylation of 60S ribosomal protein L8 on 'His-216', thereby playing a role in ribosome biogenesis. Participates in MYC-induced transcriptional activation. This chain is Ribosomal oxygenase 1, found in Rattus norvegicus (Rat).